Reading from the N-terminus, the 211-residue chain is Agamous-like MADS-box protein AGL12 (211 aa).

Positions 3-57 constitute an MADS-box domain; sequence RGKIQLKRIENPVHRQVTFCKRRTGLLKKAKELSVLCDAEIGVVIFSPQGKLFEL. In terms of domain architecture, K-box spans 95–185; sequence NLDPKDEINV…LEKIEENNNS (91 aa).

Preferentially expressed in roots. In root meristem, expressed in external cells of columella, lateral root cap and atrichoblasts. In mature root, expressed in the central cylinder. Expressed in leaf vasculature, young floral meristems and nectaries.

The protein localises to the nucleus. In terms of biological role, probable transcription activator that regulates root development by controlling cell proliferation in root meristem. May mediate responses to auxin in the root. May act as promoter of the flowering transition through up-regulation of SOC, FT and LFY. In Arabidopsis thaliana (Mouse-ear cress), this protein is Agamous-like MADS-box protein AGL12.